We begin with the raw amino-acid sequence, 243 residues long: Biosynthetic peptidoglycan transglycosylase (243 aa).

Residues 22–42 (LIVLLVLALMSVLQVIVFRFV) traverse the membrane as a helical segment.

This sequence belongs to the glycosyltransferase 51 family.

Its subcellular location is the cell inner membrane. The catalysed reaction is [GlcNAc-(1-&gt;4)-Mur2Ac(oyl-L-Ala-gamma-D-Glu-L-Lys-D-Ala-D-Ala)](n)-di-trans,octa-cis-undecaprenyl diphosphate + beta-D-GlcNAc-(1-&gt;4)-Mur2Ac(oyl-L-Ala-gamma-D-Glu-L-Lys-D-Ala-D-Ala)-di-trans,octa-cis-undecaprenyl diphosphate = [GlcNAc-(1-&gt;4)-Mur2Ac(oyl-L-Ala-gamma-D-Glu-L-Lys-D-Ala-D-Ala)](n+1)-di-trans,octa-cis-undecaprenyl diphosphate + di-trans,octa-cis-undecaprenyl diphosphate + H(+). It functions in the pathway cell wall biogenesis; peptidoglycan biosynthesis. In terms of biological role, peptidoglycan polymerase that catalyzes glycan chain elongation from lipid-linked precursors. In Xylella fastidiosa (strain 9a5c), this protein is Biosynthetic peptidoglycan transglycosylase.